The following is a 131-amino-acid chain: Large ribosomal subunit protein bL17 (131 aa).

The protein belongs to the bacterial ribosomal protein bL17 family. As to quaternary structure, part of the 50S ribosomal subunit. Contacts protein L32.

In Finegoldia magna (strain ATCC 29328 / DSM 20472 / WAL 2508) (Peptostreptococcus magnus), this protein is Large ribosomal subunit protein bL17.